The following is a 111-amino-acid chain: 4'-hydroxy-3'-methoxypropiophenone carrier protein ppsC (111 aa).

The tract at residues methionine 1 to glycine 21 is disordered.

It functions in the pathway secondary metabolite biosynthesis. Functionally, 4'-hydroxy-3'-methoxypropiophenone carrier protein; part of the gene cluster that mediates the biosynthesis of 2,4'-dihydroxy-3'-methoxypropiophenone. The first step of the pathway is the conversion of acetate into acetyl-CoA by the acyl-CoA ligase ppsA. Acetyl-CoA is then used as a starter unit by the polyketide synthase ppsB and condensed with 4 malonyl-CoA unit to produce the pentaketide backbone. During polyketide extension, the polykedite chain is probably reduced and dehydrated by the KR and PT domains, respectively. O-methylation seems to be catalyzed by an unknown methyltransferase rather than by the CMeT domain of ppsB. Two hydroxylations and one further decarboxylation step catalyzed by yet unknown enzymes are then required to yield 4'-hydroxy-3'-methoxypropiophenone. PpsC functions as a carrier protein to transport 4'-hydroxy-3'-methoxypropiophenone to a specific cell compartment in which 4'-hydroxy-3'-methoxypropiophenone is hydroxylated to 2,4'-dihydroxy-3'-methoxypropiophenone by a still to be identified enzyme. The sequence is that of 4'-hydroxy-3'-methoxypropiophenone carrier protein ppsC from Aspergillus oryzae (strain ATCC 42149 / RIB 40) (Yellow koji mold).